A 680-amino-acid chain; its full sequence is Galactose oxidase (680 aa).

The signal sequence occupies residues 1–24; it reads MKHLLTLALCFSSINAVAVTVPHK. Residues 25–41 constitute a propeptide that is removed on maturation; sequence AVGTGIPEGSLQFLSLR. One can recognise an F5/8 type C domain in the interval 42–189; it reads ASAPIGSAIS…SIAEINVFQA (148 aa). A disulfide bond links Cys-59 and Cys-68. 5 Kelch repeats span residues 223–268, 279–321, 323–372, 436–490, and 492–544; these read RVLM…HDMF, QIVV…TMSD, RVFT…LYRS, KILT…VLPD, and STFI…LLLP. Positions 269 to 313 form a cross-link, 3'-(S-cysteinyl)-tyrosine (Cys-Tyr); sequence CPGISMDGNGQIVVTGGNDAKKTSLYDSSSDSWIPGPDMQVARGY. Residue Tyr-313 coordinates Cu cation. 2 residues coordinate Cu cation: Tyr-536 and His-537. Tyr-536 functions as the Proton acceptor in the catalytic mechanism. Cys-556 and Cys-559 are joined by a disulfide. His-622 contacts Cu cation.

As to quaternary structure, monomer. It depends on Cu(2+) as a cofactor. Post-translationally, galactose oxidase contains a protein-derived free radical cofactor. In the active state, Tyr-313, which is cross-linked to Cys-269 via a thioether bond, is oxidized to a radical and acts with Cu(2+) as a two-electron acceptor in the oxidation reaction. The cross-link is believed to modulate the redox potential of the tyrosyl radical, which is further stabilized by a stacking interaction with Trp-331 in the active site. The post-translational formation of the cross-link is closely linked to the propeptide cleavage event, and both are copper-dependent, autocatalytic processes. The propeptide may act as an intramolecular chaperone, facilitating thioester bond formation and copper binding by positioning of active-site residues, including copper ligands.

It localises to the secreted. It carries out the reaction D-galactose + O2 = D-galacto-hexodialdose + H2O2. Inhibited by diethyldithiocarbamate. In terms of biological role, catalyzes the sterospecific oxidation of primary alcohols to the corresponding aldehydes. The biologically relevant substrate of the enzyme is not known as the enzyme exhibits broad substrate specificity from small alcohols through sugars to oligo- and polysaccharides. In Gibberella zeae (Wheat head blight fungus), this protein is Galactose oxidase (GAOA).